A 100-amino-acid chain; its full sequence is Urease subunit gamma (100 aa).

Belongs to the urease gamma subunit family. As to quaternary structure, heterotrimer of UreA (gamma), UreB (beta) and UreC (alpha) subunits. Three heterotrimers associate to form the active enzyme.

The protein resides in the cytoplasm. It catalyses the reaction urea + 2 H2O + H(+) = hydrogencarbonate + 2 NH4(+). It functions in the pathway nitrogen metabolism; urea degradation; CO(2) and NH(3) from urea (urease route): step 1/1. The polypeptide is Urease subunit gamma (Rhodopseudomonas palustris (strain BisB18)).